A 388-amino-acid chain; its full sequence is G2/mitotic-specific cyclin-B2 (388 aa).

Positions 46–67 are disordered; it reads ATNGKVGPSKKPSKASCVQKPK.

Belongs to the cyclin family. Cyclin AB subfamily. Interacts with the CDK1 protein kinase to form a serine/threonine kinase holoenzyme complex also known as maturation promoting factor (MPF). The cyclin subunit imparts substrate specificity to the complex.

Functionally, essential for the control of the cell cycle at the G2/M (mitosis) transition. The chain is G2/mitotic-specific cyclin-B2 (ccnb2) from Oryzias curvinotus (Hynann ricefish).